A 754-amino-acid polypeptide reads, in one-letter code: DNA topoisomerase 4 subunit A (754 aa).

The Topo IIA-type catalytic domain maps to 38-501 (LPHIGDGLKP…EARALSETEL (464 aa)). The active-site O-(5'-phospho-DNA)-tyrosine intermediate is the tyrosine 127.

The protein belongs to the type II topoisomerase GyrA/ParC subunit family. ParC type 1 subfamily. Heterotetramer composed of ParC and ParE.

It localises to the cell membrane. It catalyses the reaction ATP-dependent breakage, passage and rejoining of double-stranded DNA.. Its function is as follows. Topoisomerase IV is essential for chromosome segregation. It relaxes supercoiled DNA. Performs the decatenation events required during the replication of a circular DNA molecule. This chain is DNA topoisomerase 4 subunit A, found in Pseudomonas aeruginosa (strain ATCC 15692 / DSM 22644 / CIP 104116 / JCM 14847 / LMG 12228 / 1C / PRS 101 / PAO1).